The chain runs to 414 residues: Esterase FrsA (414 aa).

The protein belongs to the FrsA family.

It carries out the reaction a carboxylic ester + H2O = an alcohol + a carboxylate + H(+). Its function is as follows. Catalyzes the hydrolysis of esters. This is Esterase FrsA from Shigella boydii serotype 4 (strain Sb227).